We begin with the raw amino-acid sequence, 479 residues long: Bifunctional NAD(P)H-hydrate repair enzyme Nnr (479 aa).

An NAD(P)H-hydrate epimerase region spans residues 1 to 214 (MTVIIQGRSF…GIGIPLLAEI (214 aa)). In terms of domain architecture, YjeF N-terminal spans 31–214 (MRRIDQNAQA…GIGIPLLAEI (184 aa)). The tract at residues 76-80 (NNGGD) is NADPHX 1; for epimerase activity. K(+) is bound by residues asparagine 77 and aspartate 146. The segment at 150–156 (GTGGTGS) is NADPHX 1; for epimerase activity. Aspartate 179 is a binding site for (6S)-NADPHX. Residue serine 182 participates in K(+) binding. The 259-residue stretch at 216–474 (TGPGDLLILR…TAVPQVLFRS (259 aa)) folds into the YjeF C-terminal domain. The interval 216 to 479 (TGPGDLLILR…VLFRSTSERE (264 aa)) is ADP-dependent (S)-NAD(P)H-hydrate dehydratase. A (6S)-NADPHX-binding site is contributed by glycine 312. Positions 353–359 (HAGEFAR) are NADPHX 2; for dehydratase activity. ADP contacts are provided by residues 388-392 (KGAVD) and 407-416 (TPAMTTGGTG). Aspartate 417 serves as a coordination point for (6S)-NADPHX.

This sequence in the N-terminal section; belongs to the NnrE/AIBP family. The protein in the C-terminal section; belongs to the NnrD/CARKD family. K(+) is required as a cofactor.

It catalyses the reaction (6S)-NADHX + ADP = AMP + phosphate + NADH + H(+). It carries out the reaction (6S)-NADPHX + ADP = AMP + phosphate + NADPH + H(+). The enzyme catalyses (6R)-NADHX = (6S)-NADHX. The catalysed reaction is (6R)-NADPHX = (6S)-NADPHX. Functionally, bifunctional enzyme that catalyzes the epimerization of the S- and R-forms of NAD(P)HX and the dehydration of the S-form of NAD(P)HX at the expense of ADP, which is converted to AMP. This allows the repair of both epimers of NAD(P)HX, a damaged form of NAD(P)H that is a result of enzymatic or heat-dependent hydration. The sequence is that of Bifunctional NAD(P)H-hydrate repair enzyme Nnr (nnr) from Methanospirillum hungatei JF-1 (strain ATCC 27890 / DSM 864 / NBRC 100397 / JF-1).